A 92-amino-acid polypeptide reads, in one-letter code: Small ribosomal subunit protein uS19 (92 aa).

It belongs to the universal ribosomal protein uS19 family.

Protein S19 forms a complex with S13 that binds strongly to the 16S ribosomal RNA. The polypeptide is Small ribosomal subunit protein uS19 (Bacillus thuringiensis subsp. konkukian (strain 97-27)).